A 522-amino-acid chain; its full sequence is BAR/IMD domain-containing adapter protein 2-like 2 (522 aa).

One can recognise an IMD domain in the interval 1–239 (MAPEMDQFYR…HSPGLLGPAL (239 aa)). 2 disordered regions span residues 220 to 325 (SEAS…GGGG) and 404 to 502 (PMSP…GTNP). A phosphoserine mark is found at Ser-231, Ser-272, and Ser-303. The segment covering 297-317 (RTPSASSLYASSTQRSRSNSF) has biased composition (polar residues). Residues 324-387 (GGARRVRALV…PEAYVKPVEE (64 aa)) enclose the SH3 domain. Low complexity predominate over residues 443-456 (SQSRSRTPSRVPSR). Over residues 457-466 (APSPAPPPLP) the composition is skewed to pro residues. Residues Ser-472 and Ser-475 each carry the phosphoserine modification.

Expressed in the epithelial layer of the intestine and in the kidney.

The protein resides in the cell membrane. The protein localises to the cell junction. It localises to the cytoplasmic vesicle membrane. Its function is as follows. Phosphoinositides-binding protein that induces the formation of planar or gently curved membrane structures. Binds to phosphoinositides, including to phosphatidylinositol 4,5-bisphosphate (PtdIns(4,5)P2) headgroups. There seems to be no clear preference for a specific phosphoinositide. The chain is BAR/IMD domain-containing adapter protein 2-like 2 (Baiap2l2) from Mus musculus (Mouse).